The sequence spans 379 residues: Dual-specificity RNA methyltransferase RlmN (379 aa).

Residue glutamate 97 is the Proton acceptor of the active site. The Radical SAM core domain occupies glutamine 103–aspartate 343. A disulfide bond links cysteine 110 and cysteine 346. [4Fe-4S] cluster is bound by residues cysteine 117, cysteine 121, and cysteine 124. Residues glycine 171–glutamate 172, serine 203, serine 225–histidine 227, and asparagine 303 each bind S-adenosyl-L-methionine. Cysteine 346 (S-methylcysteine intermediate) is an active-site residue.

Belongs to the radical SAM superfamily. RlmN family. It depends on [4Fe-4S] cluster as a cofactor.

It localises to the cytoplasm. The catalysed reaction is adenosine(2503) in 23S rRNA + 2 reduced [2Fe-2S]-[ferredoxin] + 2 S-adenosyl-L-methionine = 2-methyladenosine(2503) in 23S rRNA + 5'-deoxyadenosine + L-methionine + 2 oxidized [2Fe-2S]-[ferredoxin] + S-adenosyl-L-homocysteine. It carries out the reaction adenosine(37) in tRNA + 2 reduced [2Fe-2S]-[ferredoxin] + 2 S-adenosyl-L-methionine = 2-methyladenosine(37) in tRNA + 5'-deoxyadenosine + L-methionine + 2 oxidized [2Fe-2S]-[ferredoxin] + S-adenosyl-L-homocysteine. In terms of biological role, specifically methylates position 2 of adenine 2503 in 23S rRNA and position 2 of adenine 37 in tRNAs. m2A2503 modification seems to play a crucial role in the proofreading step occurring at the peptidyl transferase center and thus would serve to optimize ribosomal fidelity. This chain is Dual-specificity RNA methyltransferase RlmN, found in Pseudomonas aeruginosa (strain ATCC 15692 / DSM 22644 / CIP 104116 / JCM 14847 / LMG 12228 / 1C / PRS 101 / PAO1).